The chain runs to 254 residues: Triosephosphate isomerase (254 aa).

10–12 (NWK) serves as a coordination point for substrate. His99 serves as the catalytic Electrophile. Catalysis depends on Glu169, which acts as the Proton acceptor. Substrate contacts are provided by residues Gly175, Ser215, and 236 to 237 (GG).

It belongs to the triosephosphate isomerase family. Homodimer.

It is found in the cytoplasm. The catalysed reaction is D-glyceraldehyde 3-phosphate = dihydroxyacetone phosphate. It participates in carbohydrate biosynthesis; gluconeogenesis. Its pathway is carbohydrate degradation; glycolysis; D-glyceraldehyde 3-phosphate from glycerone phosphate: step 1/1. Involved in the gluconeogenesis. Catalyzes stereospecifically the conversion of dihydroxyacetone phosphate (DHAP) to D-glyceraldehyde-3-phosphate (G3P). This chain is Triosephosphate isomerase, found in Chlamydia caviae (strain ATCC VR-813 / DSM 19441 / 03DC25 / GPIC) (Chlamydophila caviae).